A 175-amino-acid polypeptide reads, in one-letter code: Peptide deformylase (175 aa).

2 residues coordinate Fe cation: Cys98 and His140. Glu141 is an active-site residue. His144 is a binding site for Fe cation.

The protein belongs to the polypeptide deformylase family. Requires Fe(2+) as cofactor.

It catalyses the reaction N-terminal N-formyl-L-methionyl-[peptide] + H2O = N-terminal L-methionyl-[peptide] + formate. In terms of biological role, removes the formyl group from the N-terminal Met of newly synthesized proteins. Requires at least a dipeptide for an efficient rate of reaction. N-terminal L-methionine is a prerequisite for activity but the enzyme has broad specificity at other positions. This chain is Peptide deformylase, found in Bradyrhizobium sp. (strain ORS 278).